The primary structure comprises 183 residues: MAVPQVNGDVSPRPNSAFLQHLLAYPLISDSIHTVRANEYAQRSIKLGDSAYQTFAAPVLPWLAKPYEYVSPYVARADSLGDKTLDRIDERFPIVKKPTSDLYNDTRSLILFPYNKSIEGRDHIFDVYASEAKKIEQKGLVGQGKAAVSTAFVVSNETLGWLSSFLAAKKAEATTVVKEKVKQ.

It belongs to the perilipin family.

It is found in the lipid droplet. Its function is as follows. Lipid droplet coating protein that regulates lipid metabolism, appressorial turgor pressure, and virulence. Appressorial turgor pressure is important for breaching the insect cuticle during infection. In Metarhizium robertsii (strain ARSEF 23 / ATCC MYA-3075) (Metarhizium anisopliae (strain ARSEF 23)), this protein is Lipid droplet coating protein mpl1.